Reading from the N-terminus, the 62-residue chain is Single-pass membrane and coiled-coil domain-containing protein 4 homolog (62 aa).

Residues 1–27 are disordered; it reads MRQLPGKAAKETRKMKRERKQQNKEGH. A coiled-coil region spans residues 9-31; it reads AKETRKMKRERKQQNKEGHNRVV. A helical transmembrane segment spans residues 30 to 50; that stretch reads VVTVAIPVCLAVFVMLIVYVY.

It belongs to the SMCO4 family.

The protein localises to the membrane. The sequence is that of Single-pass membrane and coiled-coil domain-containing protein 4 homolog from Nematostella vectensis (Starlet sea anemone).